Reading from the N-terminus, the 95-residue chain is MEHGDRHITVVDENGNEQLCEILFTFESEDFGKSYVFYYPVGAEFEDEEETEIHVSAFIPGEGEQEGELLPIESEEEWEMIEEVWNTFCAEQDEE.

This sequence belongs to the UPF0473 family.

The sequence is that of UPF0473 protein GWCH70_2487 from Geobacillus sp. (strain WCH70).